Reading from the N-terminus, the 475-residue chain is CAAX prenyl protease 1 homolog (475 aa).

Over 1–18 (MGMWASLDALWEMPAEKR) the chain is Lumenal. Residues 19-39 (IFGAVLLFSWTVYLWETFLAQ) traverse the membrane as a helical segment. Residues 40–81 (RQRRIYKTTTHVPPELGQIMDSETFEKSRLYQLDKSTFSFWS) are Nuclear-facing. Residues 82 to 102 (GLYSETEGTLILLFGGIPYLW) form a helical membrane-spanning segment. Topologically, residues 103–123 (RLSGRFCGYAGFGPEYEITQS) are lumenal. Residues 124–144 (LVFLLLATLFSALTGLPWSLY) traverse the membrane as a helical segment. Topologically, residues 145–170 (NTFVIEEKHGFNQQTLGFFMKDAIKK) are nuclear. A helical transmembrane segment spans residues 171–191 (FVVTQCILLPVSSLLLYIIKI). The Lumenal portion of the chain corresponds to 192–195 (GGDY). Residues 196–216 (FFIYAWLFTLVVSLVLVTIYA) form a helical membrane-spanning segment. The Nuclear segment spans residues 217-347 (DYIAPLFDKF…GHWKLGHTVK (131 aa)). His-335 contacts Zn(2+). Glu-336 is an active-site residue. His-339 contacts Zn(2+). The chain crosses the membrane as a helical span at residues 348 to 368 (NIIISQMNSFLCFFLFAVLIG). At 369–382 (RKELFAAFGFYDSQ) the chain is on the lumenal side. Residues 383–405 (PTLIGLLIIFQFIFSPYNEVLSF) form a helical membrane-spanning segment. Topologically, residues 406–475 (CLTVLSRRFE…LQALKTMKQH (70 aa)) are nuclear. Residue Glu-415 participates in Zn(2+) binding.

The protein belongs to the peptidase M48A family. Zn(2+) is required as a cofactor. Widely expressed. High levels in kidney, prostate, testis and ovary.

Its subcellular location is the endoplasmic reticulum membrane. It localises to the nucleus inner membrane. It is found in the early endosome membrane. The protein localises to the late endosome membrane. It carries out the reaction Hydrolyzes the peptide bond -P2-(S-farnesyl or geranylgeranyl)C-P1'-P2'-P3'-COOH where P1' and P2' are amino acids with aliphatic side chains and P3' is any C-terminal residue.. In terms of biological role, transmembrane metalloprotease whose catalytic activity is critical for processing lamin A/LMNA on the inner nuclear membrane and clearing clogged translocons on the endoplasmic reticulum. Proteolytically removes the C-terminal three residues of farnesylated proteins. Also plays an antiviral role independently of its protease activity by restricting enveloped RNA and DNA viruses, including influenza A, Zika, Ebola, Sindbis, vesicular stomatitis, cowpox, and vaccinia. Mechanistically, controls IFITM antiviral pathway to hinder viruses from breaching the endosomal barrier by modulating membrane fluidity. The polypeptide is CAAX prenyl protease 1 homolog (Homo sapiens (Human)).